Consider the following 131-residue polypeptide: Norrin (131 aa).

The N-terminal stretch at 1-24 (MRNHVLAASISMLSLLAIMGDTDS) is a signal peptide. 4 cysteine pairs are disulfide-bonded: C37–C94, C53–C108, C63–C124, and C67–C126. The region spanning 37-130 (CMRHHYVDSI…ILSCHCEECS (94 aa)) is the CTCK domain.

Homodimer; disulfide-linked. Component of a complex, at least composed of TSPAN12, FZD4, LRP5/6 and norrin (NDP). Binds FZD4 with high affinity. Interacts with LRP6 (via Beta-propellers 1 and 2). Expressed in the outer nuclear, inner nuclear and ganglion cell layers of the retina.

The protein localises to the secreted. Functionally, activates the canonical Wnt signaling pathway through FZD4 and LRP5 coreceptor. Plays a central role in retinal vascularization by acting as a ligand for FZD4 that signals via stabilizing beta-catenin (CTNNB1) and activating LEF/TCF-mediated transcriptional programs. Acts in concert with TSPAN12 to activate FZD4 independently of the Wnt-dependent activation of FZD4, suggesting the existence of a Wnt-independent signaling that also promote accumulation the beta-catenin (CTNNB1). May be involved in a pathway that regulates neural cell differentiation and proliferation. Possible role in neuroectodermal cell-cell interaction. The protein is Norrin (Ndp) of Mus musculus (Mouse).